The sequence spans 379 residues: Queuine tRNA-ribosyltransferase (379 aa).

The active-site Proton acceptor is the aspartate 96. Substrate contacts are provided by residues 96-100, aspartate 150, glutamine 196, and glycine 223; that span reads DSGGF. The segment at 254–260 is RNA binding; the sequence is GIGTPDY. The Nucleophile role is filled by aspartate 273. The Zn(2+) site is built by cysteine 311, cysteine 313, cysteine 316, and histidine 342.

It belongs to the queuine tRNA-ribosyltransferase family. In terms of assembly, homodimer. Within each dimer, one monomer is responsible for RNA recognition and catalysis, while the other monomer binds to the replacement base PreQ1. Zn(2+) is required as a cofactor.

It catalyses the reaction 7-aminomethyl-7-carbaguanine + guanosine(34) in tRNA = 7-aminomethyl-7-carbaguanosine(34) in tRNA + guanine. It participates in tRNA modification; tRNA-queuosine biosynthesis. Functionally, catalyzes the base-exchange of a guanine (G) residue with the queuine precursor 7-aminomethyl-7-deazaguanine (PreQ1) at position 34 (anticodon wobble position) in tRNAs with GU(N) anticodons (tRNA-Asp, -Asn, -His and -Tyr). Catalysis occurs through a double-displacement mechanism. The nucleophile active site attacks the C1' of nucleotide 34 to detach the guanine base from the RNA, forming a covalent enzyme-RNA intermediate. The proton acceptor active site deprotonates the incoming PreQ1, allowing a nucleophilic attack on the C1' of the ribose to form the product. After dissociation, two additional enzymatic reactions on the tRNA convert PreQ1 to queuine (Q), resulting in the hypermodified nucleoside queuosine (7-(((4,5-cis-dihydroxy-2-cyclopenten-1-yl)amino)methyl)-7-deazaguanosine). The polypeptide is Queuine tRNA-ribosyltransferase (Treponema denticola (strain ATCC 35405 / DSM 14222 / CIP 103919 / JCM 8153 / KCTC 15104)).